A 25-amino-acid polypeptide reads, in one-letter code: FKVDEEFQGPIVSQNRRYFLFRPRN.

Asn25 carries the asparagine amide modification.

It belongs to the NmU family.

It is found in the secreted. Functionally, stimulates uterine smooth muscle contraction and causes selective vasoconstriction. This chain is Neuromedin-U-25 (NMU), found in Sus scrofa (Pig).